Here is a 451-residue protein sequence, read N- to C-terminus: MASHAALAPSRIPASTRLASKASQQYSFLTQCSFKRLDVADFSGLRSSNSVTFTREASFHDVIAAQLTTKPTGAAPVRGETVAKLKVAINGFGRIGRNFLRCWHGRKDSPLDVVVVNDSGGVKSATHLLKYDSILGTFKADVKIIDNETFSIDGKPIKVVSNRDPLKLPWAELGIDIVIEGTGVFVDGPGAGKHIQAGAKKVIITAPAKGSDIPTYVVGVNEKDYGHDVANIISNASCTTNCLAPFVKVLDEELGIVKGTMTTTHSYTGDQRLLDASHRDLRRARAAALNIVPTSTGAAKAVSLVLPQLKGKLNGIALRVPTPNVSVVDLVVNIEKVGVTAEDVNNAFRKAAAGPLKGVLDVCDIPLVSVDFRCSDFSSTIDSSLTMVMGGDMVKVVAWYDNEWGYSQRVVDLADLVANKWPGLEGSVASGDPLEDFCKDNPADEECKLYE.

The transit peptide at 1-83 (MASHAALAPS…AAPVRGETVA (83 aa)) directs the protein to the chloroplast. Residues 94 to 95 (RI), D118, and R163 each bind NADP(+). Residues 237–239 (SCT), T268, R283, 296–297 (TG), and R319 contribute to the D-glyceraldehyde 3-phosphate site. C238 (nucleophile) is an active-site residue. Position 402 (N402) interacts with NADP(+).

Belongs to the glyceraldehyde-3-phosphate dehydrogenase family. Tetramer of either four A chains (GAPDH 2) or two A and two B chains (GAPDH 1).

The protein resides in the plastid. Its subcellular location is the chloroplast. The enzyme catalyses D-glyceraldehyde 3-phosphate + phosphate + NADP(+) = (2R)-3-phospho-glyceroyl phosphate + NADPH + H(+). It participates in carbohydrate biosynthesis; Calvin cycle. This chain is Glyceraldehyde-3-phosphate dehydrogenase B, chloroplastic (GAPB), found in Spinacia oleracea (Spinach).